The chain runs to 294 residues: Acetylglutamate kinase (294 aa).

Residues 47–48, Arg69, and Asn168 contribute to the substrate site; that span reads GG.

It belongs to the acetylglutamate kinase family. ArgB subfamily.

The protein localises to the cytoplasm. The catalysed reaction is N-acetyl-L-glutamate + ATP = N-acetyl-L-glutamyl 5-phosphate + ADP. The protein operates within amino-acid biosynthesis; L-arginine biosynthesis; N(2)-acetyl-L-ornithine from L-glutamate: step 2/4. Catalyzes the ATP-dependent phosphorylation of N-acetyl-L-glutamate. This is Acetylglutamate kinase from Corynebacterium glutamicum (strain ATCC 13032 / DSM 20300 / JCM 1318 / BCRC 11384 / CCUG 27702 / LMG 3730 / NBRC 12168 / NCIMB 10025 / NRRL B-2784 / 534).